Reading from the N-terminus, the 404-residue chain is Probable ribosomal oxygenase HI_0396 (404 aa).

A JmjC domain is found at 102-231 (ELGQLWNKFG…LIDGISKGFC (130 aa)). Positions 135, 137, and 199 each coordinate Fe cation.

Belongs to the ROX family. Fe(2+) is required as a cofactor.

In terms of biological role, oxygenase that catalyzes the hydroxylation of a ribosomal protein. This Haemophilus influenzae (strain ATCC 51907 / DSM 11121 / KW20 / Rd) protein is Probable ribosomal oxygenase HI_0396.